A 468-amino-acid chain; its full sequence is 6-phosphogluconate dehydrogenase, NAD(+)-dependent, decarboxylating (468 aa).

NAD(+) is bound by residues 9–14, 32–34, 73–75, and Asn-101; these read GLGVMG, NYT, and VTA. Residues Asn-101 and 127 to 129 each bind substrate; that span reads SGG. Lys-181 functions as the Proton acceptor in the catalytic mechanism. Position 184 to 185 (184 to 185) interacts with substrate; it reads HN. Catalysis depends on Glu-188, which acts as the Proton donor. The substrate site is built by Tyr-189, Lys-259, Arg-286, Arg-445, and His-451.

This sequence belongs to the 6-phosphogluconate dehydrogenase family. Homodimer.

The catalysed reaction is 6-phospho-D-gluconate + NAD(+) = D-ribulose 5-phosphate + CO2 + NADH. Functionally, catalyzes the oxidative decarboxylation of 6-phosphogluconate to ribulose 5-phosphate and CO(2), with concomitant reduction of NAD to NADH. Does not contribute to oxidative pentose phosphate (PP) pathway fluxes during growth on glucose. The functional role of GntZ remains obscure. In Bacillus subtilis (strain 168), this protein is 6-phosphogluconate dehydrogenase, NAD(+)-dependent, decarboxylating (gntZ).